The following is a 524-amino-acid chain: Probable cytochrome P450 12c1, mitochondrial (524 aa).

Heme is bound at residue Cys-470.

The protein belongs to the cytochrome P450 family. Requires heme as cofactor.

It localises to the mitochondrion membrane. This chain is Probable cytochrome P450 12c1, mitochondrial (Cyp12c1), found in Drosophila melanogaster (Fruit fly).